The primary structure comprises 235 residues: Chalcone--flavanone isomerase 2 (235 aa).

Positions 50 and 192 each coordinate substrate.

Belongs to the chalcone isomerase family.

The enzyme catalyses a chalcone = a flavanone.. Its pathway is secondary metabolite biosynthesis; flavonoid biosynthesis. In terms of biological role, catalyzes the intramolecular cyclization of bicyclic chalcones into tricyclic (S)-flavanones. Responsible for the isomerization of 4,2',4',6'-tetrahydroxychalcone (also termed chalcone) into naringenin. This chain is Chalcone--flavanone isomerase 2 (CHI2), found in Chrysanthemum morifolium (Florist's daisy).